A 417-amino-acid polypeptide reads, in one-letter code: Inactive cytochrome P450 76AD1 (417 aa).

Residues 4–24 traverse the membrane as a helical segment; sequence ATLAMILAIWFISFHFIKLLF.

It belongs to the cytochrome P450 family.

The protein resides in the membrane. The protein operates within pigment biosynthesis; betalain biosynthesis. Functionally, inactive cytochrome unable to convert L-DOPA to cyclo-DOPA in the betalain pathway and producing a yellow mutant phenotype. A frameshift replaces 108 amino acids of the active protein found in red beets (AC I3PFJ5) with 27 new residues followed by a stop codon. The protein is Inactive cytochrome P450 76AD1 of Beta vulgaris (Sugar beet).